The chain runs to 429 residues: Adenylosuccinate synthetase (429 aa).

GTP contacts are provided by residues 12–18 and 40–42; these read GDEGKGK and GHT. The active-site Proton acceptor is the aspartate 13. Mg(2+) contacts are provided by aspartate 13 and glycine 40. IMP contacts are provided by residues 13 to 16, 38 to 41, threonine 128, arginine 142, glutamine 223, threonine 238, and arginine 302; these read DEGK and NAGH. Histidine 41 functions as the Proton donor in the catalytic mechanism. 298–304 serves as a coordination point for substrate; it reads TTTGRPR. Residues arginine 304, 330-332, and 412-414 each bind GTP; these read SID and SVG.

It belongs to the adenylosuccinate synthetase family. As to quaternary structure, homodimer. Requires Mg(2+) as cofactor.

It localises to the cytoplasm. It carries out the reaction IMP + L-aspartate + GTP = N(6)-(1,2-dicarboxyethyl)-AMP + GDP + phosphate + 2 H(+). The protein operates within purine metabolism; AMP biosynthesis via de novo pathway; AMP from IMP: step 1/2. Its function is as follows. Plays an important role in the de novo pathway of purine nucleotide biosynthesis. Catalyzes the first committed step in the biosynthesis of AMP from IMP. The sequence is that of Adenylosuccinate synthetase from Exiguobacterium sp. (strain ATCC BAA-1283 / AT1b).